The sequence spans 191 residues: MLLSDRDIRAELASGRVTIDPFDPAMIQPSSIDVRLDKYFRVFENHRYPHIDPAVEQPDLTRLVETEGDEPFILHPGEFVLASTYEVIALPDDLAGRLEGKSSLGRLGLLTHSTAGWIDPGFTGHVTLELSNVATLPIKLWPGMKIGQLCLFRTSSPAEHPYGSPVYGSRYQGQRGPTPSRSWQNFHRTKI.

Residues 101–106 (KSSLGR), D119, 127–129 (TLE), Q148, Y162, and Q174 contribute to the dCTP site. The active-site Proton donor/acceptor is E129. Positions 163 to 191 (GSPVYGSRYQGQRGPTPSRSWQNFHRTKI) are disordered. Polar residues predominate over residues 171–191 (YQGQRGPTPSRSWQNFHRTKI).

Belongs to the dCTP deaminase family. Homotrimer.

It catalyses the reaction dCTP + 2 H2O = dUMP + NH4(+) + diphosphate. The protein operates within pyrimidine metabolism; dUMP biosynthesis; dUMP from dCTP: step 1/1. Functionally, bifunctional enzyme that catalyzes both the deamination of dCTP to dUTP and the hydrolysis of dUTP to dUMP without releasing the toxic dUTP intermediate. This is dCTP deaminase, dUMP-forming from Acidothermus cellulolyticus (strain ATCC 43068 / DSM 8971 / 11B).